The following is a 689-amino-acid chain: DNA ligase (689 aa).

Residues 40–44, 89–90, and Glu-121 each bind NAD(+); these read DAEYD and SL. Lys-123 functions as the N6-AMP-lysine intermediate in the catalytic mechanism. The NAD(+) site is built by Arg-144, Glu-179, Lys-295, and Lys-319. Zn(2+) contacts are provided by Cys-413, Cys-416, Cys-431, and Cys-437. The BRCT domain maps to 610–689; that stretch reads RAQSSLTGKI…EEWLTLIKNA (80 aa).

It belongs to the NAD-dependent DNA ligase family. LigA subfamily. Mg(2+) is required as a cofactor. The cofactor is Mn(2+).

The enzyme catalyses NAD(+) + (deoxyribonucleotide)n-3'-hydroxyl + 5'-phospho-(deoxyribonucleotide)m = (deoxyribonucleotide)n+m + AMP + beta-nicotinamide D-nucleotide.. Functionally, DNA ligase that catalyzes the formation of phosphodiester linkages between 5'-phosphoryl and 3'-hydroxyl groups in double-stranded DNA using NAD as a coenzyme and as the energy source for the reaction. It is essential for DNA replication and repair of damaged DNA. This is DNA ligase from Rickettsia akari (strain Hartford).